Reading from the N-terminus, the 104-residue chain is L-rhamnose mutarotase (104 aa).

Tyr-18 is a substrate binding site. The Proton donor role is filled by His-22. Substrate-binding positions include Tyr-41 and 76–77; that span reads WW.

Belongs to the rhamnose mutarotase family. Homodimer.

The protein localises to the cytoplasm. It carries out the reaction alpha-L-rhamnose = beta-L-rhamnose. Its pathway is carbohydrate metabolism; L-rhamnose metabolism. Functionally, involved in the anomeric conversion of L-rhamnose. The sequence is that of L-rhamnose mutarotase from Salmonella arizonae (strain ATCC BAA-731 / CDC346-86 / RSK2980).